A 141-amino-acid chain; its full sequence is Large ribosomal subunit protein uL11 (141 aa).

It belongs to the universal ribosomal protein uL11 family. Part of the ribosomal stalk of the 50S ribosomal subunit. Interacts with L10 and the large rRNA to form the base of the stalk. L10 forms an elongated spine to which L12 dimers bind in a sequential fashion forming a multimeric L10(L12)X complex. One or more lysine residues are methylated.

Its function is as follows. Forms part of the ribosomal stalk which helps the ribosome interact with GTP-bound translation factors. The protein is Large ribosomal subunit protein uL11 of Gloeothece citriformis (strain PCC 7424) (Cyanothece sp. (strain PCC 7424)).